The sequence spans 478 residues: Solute carrier family 2, facilitated glucose transporter member 8 (478 aa).

The tract at residues 1 to 20 (MTPEDQEETQPLLRPPGGSA) is disordered. Residues 1-25 (MTPEDQEETQPLLRPPGGSAPRGRR) are Cytoplasmic-facing. The span at 11-20 (PLLRPPGGSA) shows a compositional bias: low complexity. Residues 12-13 (LL) carry the Dileucine internalization motif motif. Residues 26–46 (VFLAAFAAALGPLSFGFALGY) traverse the membrane as a helical segment. Over 47–70 (SSPAIPSLRRAAPPAPHLDEDAAS) the chain is Extracellular. The chain crosses the membrane as a helical span at residues 71–91 (WFGAIVTLGAAAGGVLGGWLL). The Cytoplasmic portion of the chain corresponds to 92-97 (DRAGRK). A helical transmembrane segment spans residues 98–118 (LSLVLCALPFVAGFAVITAAQ). At 119–127 (NLWMLLGGR) the chain is on the extracellular side. The chain crosses the membrane as a helical span at residues 128–148 (LLTGLACGIASLVAPVYISEI). The Cytoplasmic segment spans residues 149–158 (AYPEVRGLLG). The chain crosses the membrane as a helical span at residues 159-179 (SCVQLMVVTGILLAYLAGWVL). Glutamine 162 lines the D-glucose pocket. At 180–182 (EWR) the chain is on the extracellular side. The helical transmembrane segment at 183 to 203 (WLAVLGCVPPSFMLLLMCFMP) threads the bilayer. Residues 204–257 (ETPRFLLSQHKHQEAMAAMQFLWGYAQGWEEPPLGAQHQDFHVAQLRRPGVYKP) are Cytoplasmic-facing. Residues 258 to 278 (FIIGISLMAFQQLSGVNAVMF) form a helical membrane-spanning segment. D-glucose-binding positions include 268–269 (QQ) and asparagine 274. Topologically, residues 279–293 (YAETIFEEAKFKDSS) are extracellular. Residues 294 to 314 (LASVVVGVIQVLFTATAALIM) form a helical membrane-spanning segment. Residues 315-320 (DRAGRR) lie on the Cytoplasmic side of the membrane. A helical transmembrane segment spans residues 321-341 (LLLTLSGVVMVFSTSAFGTYF). Residues 342–368 (KLTEGGPSNSSHVDLPALVSMEAADTN) are Extracellular-facing. A glycan (N-linked (GlcNAc...) asparagine) is linked at asparagine 350. The helical transmembrane segment at 369 to 389 (VGLAWLAVGSMCLFIAGFAVG) threads the bilayer. The Cytoplasmic portion of the chain corresponds to 390–405 (WGPIPWLLMSEIFPLH). Position 395 (tryptophan 395) interacts with D-glucose. A helical transmembrane segment spans residues 406-426 (VKGVATGVCVLTNWFMAFLVT). The Extracellular portion of the chain corresponds to 427–439 (KEFSSLMEVLRPY). Residues 440 to 460 (GAFWLASAFCIFGVLFTLACV) form a helical membrane-spanning segment. At 461–478 (PETKGKTLEQITAHFEGR) the chain is on the cytoplasmic side.

The protein belongs to the major facilitator superfamily. Sugar transporter (TC 2.A.1.1) family. Glucose transporter subfamily. Interacts with AP2B1. As to expression, abundantly expressed in testis and more moderately in lung, kidney, spleen, intestine, skeletal muscle, liver and mammary gland.

It localises to the cell membrane. Its subcellular location is the cytoplasmic vesicle membrane. It catalyses the reaction D-glucose(out) = D-glucose(in). It carries out the reaction D-fructose(out) = D-fructose(in). The enzyme catalyses L-dehydroascorbate(out) = L-dehydroascorbate(in). The catalysed reaction is alpha,alpha-trehalose(in) = alpha,alpha-trehalose(out). Its activity is regulated as follows. Inhibited by cytochalasin B. Functionally, insulin-regulated facilitative hexose transporter that mediates the transport of glucose and fructose. Facilitates hepatic influx of dietary trehalose, which in turn inhibits glucose and fructose influx triggering a starvation signal and hepatic autophagy through activation of AMPK and ULK1. Also able to mediate the transport of dehydroascorbate. This is Solute carrier family 2, facilitated glucose transporter member 8 from Bos taurus (Bovine).